A 514-amino-acid chain; its full sequence is Glutamyl-tRNA(Gln) amidotransferase subunit B, mitochondrial (514 aa).

This sequence belongs to the GatB/GatE family. GatB subfamily. In terms of assembly, subunit of the heterotrimeric GatCAB amidotransferase (AdT) complex, composed of A, B and C subunits.

It is found in the mitochondrion. The catalysed reaction is L-glutamyl-tRNA(Gln) + L-glutamine + ATP + H2O = L-glutaminyl-tRNA(Gln) + L-glutamate + ADP + phosphate + H(+). In terms of biological role, allows the formation of correctly charged Gln-tRNA(Gln) through the transamidation of misacylated Glu-tRNA(Gln) in the mitochondria. The reaction takes place in the presence of glutamine and ATP through an activated gamma-phospho-Glu-tRNA(Gln). This chain is Glutamyl-tRNA(Gln) amidotransferase subunit B, mitochondrial, found in Naegleria gruberi (Amoeba).